The following is a 797-amino-acid chain: Complex I intermediate-associated protein 84, mitochondrial (797 aa).

The N-terminal 69 residues, 1–69 (MRSHLARNAT…ALCTRTSKRT (69 aa)), are a transit peptide targeting the mitochondrion.

The protein localises to the mitochondrion. Its function is as follows. Chaperone protein involved in the assembly of the mitochondrial NADH:ubiquinone oxidoreductase complex (complex I). This chain is Complex I intermediate-associated protein 84, mitochondrial (cia84), found in Neurospora crassa (strain ATCC 24698 / 74-OR23-1A / CBS 708.71 / DSM 1257 / FGSC 987).